The sequence spans 365 residues: Pre-mRNA-splicing factor srp2 (365 aa).

RRM domains follow at residues 6 to 69 (LFVG…RIVV) and 100 to 166 (LIVE…AVTL). The disordered stretch occupies residues 166–365 (LREDPDAANE…SAEGQVAAEW (200 aa)). Residues 184–194 (FRSRSPPARRR) show a composition bias toward basic residues. Phosphoserine is present on residues serine 186, serine 188, serine 276, serine 294, serine 296, serine 298, and serine 308. The segment covering 195 to 307 (YRDDYRRGGD…SPRRDREENR (113 aa)) has biased composition (basic and acidic residues). Positions 316–332 (SYSAAPEASMESSAPTE) are enriched in low complexity. The span at 341-353 (EEQQPLQNHSDVG) shows a compositional bias: polar residues.

Belongs to the splicing factor SR family. In terms of processing, extensively phosphorylated on serine residues in the RS domain.

The protein resides in the nucleus. Its function is as follows. Has a role in pre-mRNA splicing where it is involved in spliceosome assembly. In Schizosaccharomyces pombe (strain 972 / ATCC 24843) (Fission yeast), this protein is Pre-mRNA-splicing factor srp2 (srp2).